We begin with the raw amino-acid sequence, 181 residues long: Protein Syd (181 aa).

The protein belongs to the Syd family.

Its subcellular location is the cell inner membrane. In terms of biological role, interacts with the SecY protein in vivo. May bind preferentially to an uncomplexed state of SecY, thus functioning either as a chelating agent for excess SecY in the cell or as a regulatory factor that negatively controls the translocase function. The sequence is that of Protein Syd from Escherichia coli O81 (strain ED1a).